The following is a 539-amino-acid chain: CTP synthase (539 aa).

The interval 1–268 is amidoligase domain; it reads MSFKCIFLTG…STFITEKLGL (268 aa). Residue S14 coordinates CTP. S14 serves as a coordination point for UTP. Position 15-20 (15-20) interacts with ATP; sequence SLGKGL. Residue Y55 participates in L-glutamine binding. D72 contributes to the ATP binding site. Residues D72 and E142 each contribute to the Mg(2+) site. CTP-binding positions include 149–151, 188–193, and K224; these read DIE and KTKPTQ. Residues 188-193 and K224 each bind UTP; that span reads KTKPTQ. A Glutamine amidotransferase type-1 domain is found at 294 to 533; sequence RIGLVGKYVQ…IQAAILYSRN (240 aa). G353 provides a ligand contact to L-glutamine. The active-site Nucleophile; for glutamine hydrolysis is the C380. L-glutamine-binding positions include 381–384, E404, and R461; that span reads LGMQ. Active-site residues include H506 and E508.

This sequence belongs to the CTP synthase family. In terms of assembly, homotetramer.

It catalyses the reaction UTP + L-glutamine + ATP + H2O = CTP + L-glutamate + ADP + phosphate + 2 H(+). It carries out the reaction L-glutamine + H2O = L-glutamate + NH4(+). The enzyme catalyses UTP + NH4(+) + ATP = CTP + ADP + phosphate + 2 H(+). The protein operates within pyrimidine metabolism; CTP biosynthesis via de novo pathway; CTP from UDP: step 2/2. Allosterically activated by GTP, when glutamine is the substrate; GTP has no effect on the reaction when ammonia is the substrate. The allosteric effector GTP functions by stabilizing the protein conformation that binds the tetrahedral intermediate(s) formed during glutamine hydrolysis. Inhibited by the product CTP, via allosteric rather than competitive inhibition. Its function is as follows. Catalyzes the ATP-dependent amination of UTP to CTP with either L-glutamine or ammonia as the source of nitrogen. Regulates intracellular CTP levels through interactions with the four ribonucleotide triphosphates. This Chlamydia felis (strain Fe/C-56) (Chlamydophila felis) protein is CTP synthase.